The sequence spans 118 residues: UPF0102 protein ROP_66030 (118 aa).

It belongs to the UPF0102 family.

The sequence is that of UPF0102 protein ROP_66030 from Rhodococcus opacus (strain B4).